Consider the following 135-residue polypeptide: DNA-directed RNA polymerase subunit omega (135 aa).

The protein belongs to the RNA polymerase subunit omega family. As to quaternary structure, the RNAP catalytic core consists of 2 alpha, 1 beta, 1 beta' and 1 omega subunit. When a sigma factor is associated with the core the holoenzyme is formed, which can initiate transcription.

The catalysed reaction is RNA(n) + a ribonucleoside 5'-triphosphate = RNA(n+1) + diphosphate. In terms of biological role, promotes RNA polymerase assembly. Latches the N- and C-terminal regions of the beta' subunit thereby facilitating its interaction with the beta and alpha subunits. The sequence is that of DNA-directed RNA polymerase subunit omega from Sinorhizobium medicae (strain WSM419) (Ensifer medicae).